The sequence spans 429 residues: uncharacterized protein (429 aa).

This is an uncharacterized protein from Mycobacterium tuberculosis (strain CDC 1551 / Oshkosh).